We begin with the raw amino-acid sequence, 321 residues long: Probable GDP-L-fucose synthase (321 aa).

8 to 14 lines the NADP(+) pocket; that stretch reads GGTGLVG. Tyr136 serves as the catalytic Proton donor/acceptor. Residues Lys140, 163-166, and His179 contribute to the NADP(+) site; that span reads PCNI. Residues Arg187, Arg215, and Asp277 each contribute to the substrate site.

The protein belongs to the NAD(P)-dependent epimerase/dehydratase family. Fucose synthase subfamily. Homodimer.

It catalyses the reaction GDP-beta-L-fucose + NADP(+) = GDP-4-dehydro-alpha-D-rhamnose + NADPH + H(+). It participates in nucleotide-sugar biosynthesis; GDP-L-fucose biosynthesis via de novo pathway; GDP-L-fucose from GDP-alpha-D-mannose: step 2/2. Its function is as follows. Catalyzes the two-step NADP-dependent conversion of GDP-4-dehydro-6-deoxy-D-mannose to GDP-fucose, involving an epimerase and a reductase reaction. In Drosophila melanogaster (Fruit fly), this protein is Probable GDP-L-fucose synthase (Gmer).